The sequence spans 601 residues: Elongation factor 4 (601 aa).

In terms of domain architecture, tr-type G spans R7–K189. GTP is bound by residues D19–T24 and N136–D139.

It belongs to the TRAFAC class translation factor GTPase superfamily. Classic translation factor GTPase family. LepA subfamily.

The protein resides in the cell inner membrane. The catalysed reaction is GTP + H2O = GDP + phosphate + H(+). Its function is as follows. Required for accurate and efficient protein synthesis under certain stress conditions. May act as a fidelity factor of the translation reaction, by catalyzing a one-codon backward translocation of tRNAs on improperly translocated ribosomes. Back-translocation proceeds from a post-translocation (POST) complex to a pre-translocation (PRE) complex, thus giving elongation factor G a second chance to translocate the tRNAs correctly. Binds to ribosomes in a GTP-dependent manner. In Xanthomonas axonopodis pv. citri (strain 306), this protein is Elongation factor 4.